The following is a 518-amino-acid chain: Phytoene desaturase (neurosporene-forming) (518 aa).

Residue 14–47 (LVIGSGLGGLAAAMRLGAKGWRVTVIDKLDVPGG) participates in FAD binding.

It belongs to the carotenoid/retinoid oxidoreductase family. Requires FAD as cofactor.

It carries out the reaction 15-cis-phytoene + 3 A = all-trans-neurosporene + 3 AH2. It participates in carotenoid biosynthesis. Converts phytoene into all-trans-neurosporene as the major product, via the intermediary of phytofluene and zeta-carotene, by the introduction of three double bonds. The sequence is that of Phytoene desaturase (neurosporene-forming) (crtI) from Cereibacter sphaeroides (strain ATCC 17023 / DSM 158 / JCM 6121 / CCUG 31486 / LMG 2827 / NBRC 12203 / NCIMB 8253 / ATH 2.4.1.) (Rhodobacter sphaeroides).